We begin with the raw amino-acid sequence, 371 residues long: tRNA-specific 2-thiouridylase MnmA (371 aa).

ATP-binding positions include glycine 13–serine 20 and methionine 39. The segment at asparagine 99–aspartate 101 is interaction with target base in tRNA. The active-site Nucleophile is cysteine 104. Cysteine 104 and cysteine 200 form a disulfide bridge. Residue glycine 128 coordinates ATP. Residues lysine 150–glutamine 152 form an interaction with tRNA region. Cysteine 200 (cysteine persulfide intermediate) is an active-site residue. Residues arginine 308–tyrosine 309 form an interaction with tRNA region.

Belongs to the MnmA/TRMU family.

The protein resides in the cytoplasm. It catalyses the reaction S-sulfanyl-L-cysteinyl-[protein] + uridine(34) in tRNA + AH2 + ATP = 2-thiouridine(34) in tRNA + L-cysteinyl-[protein] + A + AMP + diphosphate + H(+). Functionally, catalyzes the 2-thiolation of uridine at the wobble position (U34) of tRNA, leading to the formation of s(2)U34. In Bacillus mycoides (strain KBAB4) (Bacillus weihenstephanensis), this protein is tRNA-specific 2-thiouridylase MnmA.